A 94-amino-acid polypeptide reads, in one-letter code: Phosphoribosyl-ATP pyrophosphatase (94 aa).

This sequence belongs to the PRA-PH family.

It localises to the cytoplasm. The enzyme catalyses 1-(5-phospho-beta-D-ribosyl)-ATP + H2O = 1-(5-phospho-beta-D-ribosyl)-5'-AMP + diphosphate + H(+). Its pathway is amino-acid biosynthesis; L-histidine biosynthesis; L-histidine from 5-phospho-alpha-D-ribose 1-diphosphate: step 2/9. The polypeptide is Phosphoribosyl-ATP pyrophosphatase (Pyrobaculum islandicum (strain DSM 4184 / JCM 9189 / GEO3)).